We begin with the raw amino-acid sequence, 185 residues long: Ribosome-recycling factor (185 aa).

This sequence belongs to the RRF family.

The protein localises to the cytoplasm. Responsible for the release of ribosomes from messenger RNA at the termination of protein biosynthesis. May increase the efficiency of translation by recycling ribosomes from one round of translation to another. This is Ribosome-recycling factor from Erwinia tasmaniensis (strain DSM 17950 / CFBP 7177 / CIP 109463 / NCPPB 4357 / Et1/99).